A 1906-amino-acid chain; its full sequence is Alpha-2-macroglobulin homolog (1906 aa).

Positions 1-21 are cleaved as a signal peptide; the sequence is MIIRVCIRCFIVLTLVLGIGG. A lipid anchor (N-palmitoyl cysteine) is attached at Cys22. The S-diacylglycerol cysteine moiety is linked to residue Cys22.

Belongs to the protease inhibitor I39 (alpha-2-macroglobulin) family. Bacterial alpha-2-macroglobulin subfamily.

It is found in the cell membrane. This is Alpha-2-macroglobulin homolog from Nostoc sp. (strain PCC 7120 / SAG 25.82 / UTEX 2576).